Consider the following 228-residue polypeptide: 2-C-methyl-D-erythritol 4-phosphate cytidylyltransferase (228 aa).

The protein belongs to the IspD/TarI cytidylyltransferase family. IspD subfamily.

It carries out the reaction 2-C-methyl-D-erythritol 4-phosphate + CTP + H(+) = 4-CDP-2-C-methyl-D-erythritol + diphosphate. Its pathway is isoprenoid biosynthesis; isopentenyl diphosphate biosynthesis via DXP pathway; isopentenyl diphosphate from 1-deoxy-D-xylulose 5-phosphate: step 2/6. In terms of biological role, catalyzes the formation of 4-diphosphocytidyl-2-C-methyl-D-erythritol from CTP and 2-C-methyl-D-erythritol 4-phosphate (MEP). The polypeptide is 2-C-methyl-D-erythritol 4-phosphate cytidylyltransferase (Mannheimia succiniciproducens (strain KCTC 0769BP / MBEL55E)).